Consider the following 362-residue polypeptide: Shewanella-like protein phosphatase 1 (362 aa).

Positions 1 to 23 (MIFKKALYILLFLYIAIVKKGES) are cleaved as a signal peptide. The Mn(2+) site is built by Asp65, His67, Asp101, and Asn136. His137 serves as the catalytic Proton donor. Mn(2+) is bound at residue His196.

This sequence belongs to the metallophosphoesterase superfamily. SLP family. The cofactor is Mn(2+).

Its function is as follows. Phosphatase which plays an essential role in the development and differentiation of the ookinete and in the formation of ookinete micronemes. The sequence is that of Shewanella-like protein phosphatase 1 from Plasmodium berghei (strain Anka).